Reading from the N-terminus, the 60-residue chain is Potassium channel toxin alpha-KTx 15.9 (60 aa).

A signal peptide spans 1-22 (MKIFLPVLVMLILCSMCLLTEG). Disulfide bonds link cysteine 30-cysteine 51, cysteine 36-cysteine 56, and cysteine 40-cysteine 58.

This sequence belongs to the short scorpion toxin superfamily. Potassium channel inhibitor family. Alpha-KTx 15 subfamily. In terms of tissue distribution, expressed by the venom gland.

It localises to the secreted. Functionally, blocker of A-type voltage-gated potassium channels of cerebellar granular cells. May also inhibit Kv4/KCND when coexpressed with DPP6 or DPP10. The occlusion of the outer entry of the K(+) conducting pore is partially reversible and affects both open and closed channels. It shares the same target in rat brain than BmTX3 (AC Q8I0L5) and AmmTX3 (AC P60208). Has been shown to weakly inhibit TRPV1 channels. The polypeptide is Potassium channel toxin alpha-KTx 15.9 (Lychas mucronatus (Chinese swimming scorpion)).